The sequence spans 222 residues: MKTWKDVIGNEKTQPYFQHILAQVHQARASGKVVYPPQADIFNAFKLTEFDQVKVVLLGQDPYHGPNQAHGLAFSVKPPVAPPPSLMNMYKELSNEYPDFHMPNHGSLEQWAQQGVLLLNTVLTVERGQAHSHADFGWETFTDHVIHALNEQREHLVFLLWGSHAQKKGQFIDRSKHCVLTAPHPSPLSAHRGFFGCGHFTQTNDYLRRHHISEINWQLDNI.

The active-site Proton acceptor is the D61.

It belongs to the uracil-DNA glycosylase (UDG) superfamily. UNG family.

It is found in the cytoplasm. It catalyses the reaction Hydrolyzes single-stranded DNA or mismatched double-stranded DNA and polynucleotides, releasing free uracil.. Functionally, excises uracil residues from the DNA which can arise as a result of misincorporation of dUMP residues by DNA polymerase or due to deamination of cytosine. The chain is Uracil-DNA glycosylase from Actinobacillus succinogenes (strain ATCC 55618 / DSM 22257 / CCUG 43843 / 130Z).